Here is a 1012-residue protein sequence, read N- to C-terminus: Ubiquitin-activating enzyme E1 1 (1012 aa).

Position 22 (Arg-22) interacts with ATP. Ser-264 carries the phosphoserine modification. Residues Ala-437 and Asp-463 each coordinate ATP. Asp-465 and Glu-468 together coordinate Mg(2+). Residues Asn-471, Arg-474, Lys-487, Val-513, Asp-537, and Asn-538 each contribute to the ATP site. Residue Asp-537 coordinates Mg(2+). A Glycyl lysine isopeptide (Lys-Gly) (interchain with G-Cter in ubiquitin) cross-link involves residue Lys-588. The active-site Glycyl thioester intermediate is the Cys-593. At Ser-903 the chain carries Phosphoserine.

Belongs to the ubiquitin-activating E1 family. In terms of assembly, monomer. Interacts with the E2 ubiquitin-conjugating enzyme ubc4.

Its subcellular location is the cytoplasm. It localises to the nucleus. It carries out the reaction ATP + ubiquitin + [E1 ubiquitin-activating enzyme]-L-cysteine = AMP + diphosphate + S-ubiquitinyl-[E1 ubiquitin-activating enzyme]-L-cysteine.. It functions in the pathway protein modification; protein ubiquitination. Ubiquitin transfer between the E1 ubiquitin-activating enzyme ptr3 and E2 ubiquitin-conjugating enzyme ubc4 is enhanced by the presence of magnesium and ATP, or adenylated ubiquitin. Its function is as follows. E1 ubiquitin-activating enzyme that catalyzes the first step in ubiquitin conjugation to mark cellular proteins for degradation through the ubiquitin-proteasome system. Activates ubiquitin by first adenylating its C-terminal glycine residue with ATP, and thereafter linking this residue to the side chain of a cysteine residue in E1, yielding a ubiquitin-E1 thioester and free AMP. The sequence is that of Ubiquitin-activating enzyme E1 1 (ptr3) from Schizosaccharomyces pombe (strain 972 / ATCC 24843) (Fission yeast).